The following is a 559-amino-acid chain: Acetolactate synthase, catabolic (559 aa).

FAD is bound by residues Arg159, 263–284 (FNNQAGDRLLRQADLIICIGYS), and 304–323 (DVLPAYEERNYVPDIELVGD). Asp447 contributes to the Mg(2+) binding site.

The protein belongs to the TPP enzyme family. In terms of assembly, homodimer.

The catalysed reaction is 2 pyruvate + H(+) = (2S)-2-acetolactate + CO2. It participates in polyol metabolism; (R,R)-butane-2,3-diol biosynthesis; (R,R)-butane-2,3-diol from pyruvate: step 1/3. This Raoultella terrigena (Klebsiella terrigena) protein is Acetolactate synthase, catabolic (budB).